The following is a 469-amino-acid chain: UDP-N-acetylmuramoylalanine--D-glutamate ligase (469 aa).

121–127 provides a ligand contact to ATP; it reads GTNGKST.

It belongs to the MurCDEF family.

It localises to the cytoplasm. The enzyme catalyses UDP-N-acetyl-alpha-D-muramoyl-L-alanine + D-glutamate + ATP = UDP-N-acetyl-alpha-D-muramoyl-L-alanyl-D-glutamate + ADP + phosphate + H(+). The protein operates within cell wall biogenesis; peptidoglycan biosynthesis. Functionally, cell wall formation. Catalyzes the addition of glutamate to the nucleotide precursor UDP-N-acetylmuramoyl-L-alanine (UMA). This chain is UDP-N-acetylmuramoylalanine--D-glutamate ligase, found in Rhodopseudomonas palustris (strain ATCC BAA-98 / CGA009).